The following is a 338-amino-acid chain: MIEIEKVCVDFTAGRGTPTRAVDDVSLHIAAGEIFGIVGTSGAGKSTLLRTLNALTRPSQGRVNVNGVEISALDGKALRQARQRIGMIFQHFNLMHTRTVAQNVAFSLKAAGWERSKIAPRVAEILTLVGLADKANRFPVQLSGGQKQRVGIARAIANHPDVLLCDEPTSALDLETSATILALLRQINAQLGITIVLITHEMNVIKSICDRVAVMSGGKVVESGEVFDVFAHPQHAFTQQLVSHTLNLTLPERLREHLPGQLLKILFIGDSAEQPVLSEVAIKFGVAVNILHGKIEYIGERALGILVVQLTAPHNPTAVAAAVEHIRQRTAQVEVIRG.

The region spanning Ile-2 to Val-242 is the ABC transporter domain. Gly-39–Ser-46 lines the ATP pocket.

Belongs to the ABC transporter superfamily. Methionine importer (TC 3.A.1.24) family. The complex is composed of two ATP-binding proteins (MetN), two transmembrane proteins (MetI) and a solute-binding protein (MetQ).

Its subcellular location is the cell inner membrane. The catalysed reaction is L-methionine(out) + ATP + H2O = L-methionine(in) + ADP + phosphate + H(+). It carries out the reaction D-methionine(out) + ATP + H2O = D-methionine(in) + ADP + phosphate + H(+). Part of the ABC transporter complex MetNIQ involved in methionine import. Responsible for energy coupling to the transport system. In Salmonella typhimurium (strain LT2 / SGSC1412 / ATCC 700720), this protein is Methionine import ATP-binding protein MetN 2.